The sequence spans 166 residues: uncharacterized protein (166 aa).

This is an uncharacterized protein from Acidianus hospitalis (AFV-1).